The following is a 294-amino-acid chain: 4-hydroxy-tetrahydrodipicolinate synthase (294 aa).

A pyruvate-binding site is contributed by Thr-47. Tyr-135 acts as the Proton donor/acceptor in catalysis. Lys-163 serves as the catalytic Schiff-base intermediate with substrate. Thr-205 contacts pyruvate.

The protein belongs to the DapA family. In terms of assembly, homotetramer; dimer of dimers.

The protein localises to the cytoplasm. The catalysed reaction is L-aspartate 4-semialdehyde + pyruvate = (2S,4S)-4-hydroxy-2,3,4,5-tetrahydrodipicolinate + H2O + H(+). It functions in the pathway amino-acid biosynthesis; L-lysine biosynthesis via DAP pathway; (S)-tetrahydrodipicolinate from L-aspartate: step 3/4. Catalyzes the condensation of (S)-aspartate-beta-semialdehyde [(S)-ASA] and pyruvate to 4-hydroxy-tetrahydrodipicolinate (HTPA). This Rickettsia peacockii (strain Rustic) protein is 4-hydroxy-tetrahydrodipicolinate synthase.